Consider the following 157-residue polypeptide: Transcriptional repressor NrdR (157 aa).

The segment at 3–34 is a zinc-finger region; it reads CPFCGHMESQVKDSRPSEDGAAIRRRRLCPEC. Residues 49–139 enclose the ATP-cone domain; sequence LTIVKRSGRR…VYRDFRETSD (91 aa).

Belongs to the NrdR family. Zn(2+) is required as a cofactor.

In terms of biological role, negatively regulates transcription of bacterial ribonucleotide reductase nrd genes and operons by binding to NrdR-boxes. The sequence is that of Transcriptional repressor NrdR from Caulobacter sp. (strain K31).